Here is a 2126-residue protein sequence, read N- to C-terminus: Serine/threonine-protein kinase WNK1 (2126 aa).

2 disordered regions span residues 1 to 80 (MSDG…FFRR) and 93 to 202 (LPGL…QQQD). Ser-17 carries the post-translational modification Phosphoserine. The segment covering 48 to 64 (RTEEYRRRRHTMDKDSR) has biased composition (basic and acidic residues). Thr-58 is subject to Phosphothreonine. Low complexity-rich tracts occupy residues 101–111 (PQPSVPAVVPQ) and 127–141 (VASQ…AASP). Residues Ser-165 and Ser-172 each carry the phosphoserine modification. Residues 221–479 (LKFDIEIGRG…IKDLLNHAFF (259 aa)) enclose the Protein kinase domain. Ser-231 is a binding site for ATP. Residues Phe-283 and Leu-299 each contribute to the chloride site. ATP contacts are provided by residues 301-304 (TELM) and Lys-351. Asp-368 acts as the Proton acceptor in catalysis. Chloride contacts are provided by Leu-369 and Leu-371. Residues Ser-378 and Ser-382 each carry the phosphoserine; by autocatalysis modification. Residues 488–555 (ELAEEDDGEK…VCEGDHKTMA (68 aa)) are autoinhibitory domain. Residues 573–588 (QLVREEQEKRKQEESS) are compositionally biased toward basic and acidic residues. Residues 573-865 (QLVREEQEKR…SRHEKTSRPK (293 aa)) form a disordered region. Positions 593–614 (NEQQASVSQAGIQPLSVASTGI) are enriched in polar residues. Residues 615–626 (PTAPTTSASVST) are compositionally biased toward low complexity. The interval 629 to 639 (EPEEPEADQHQ) is interaction with KLHL3. Composition is skewed to polar residues over residues 638 to 682 (HQQL…GSQH), 695 to 705 (TVSSIQAQSQP), and 713 to 733 (SMAQ…VLSS). Residues 734-746 (QPVQHPQQQGIQP) show a composition bias toward low complexity. A compositionally biased stretch (polar residues) spans 750 to 789 (PQQAVQYSLPQAASSSEGTVQPVSQPQVSAGTQSSTQGVS). Residues 793–823 (PPEQTPITQSQPTQPVPLVSSVDSAHSDVAS) are compositionally biased toward low complexity. Residues 826–836 (SDGNENAPSSS) are compositionally biased toward polar residues. Residues 844–865 (TKRHYRKSVRSRSRHEKTSRPK) are compositionally biased toward basic residues. The RFXV motif 1 motif lies at 1003-1006 (RFIV). Phosphoserine is present on Ser-1007. Disordered stretches follow at residues 1474 to 1507 (GQVS…LTKT) and 1557 to 1595 (IPVT…ASSS). Residues 1477 to 1496 (STPGTHASAPASTATGAKPG) show a composition bias toward low complexity. Residues 1567–1583 (STMSSTAVTEAGSQPQK) are compositionally biased toward polar residues. The RFXV motif 2 motif lies at 1604–1607 (RFQV). The tract at residues 1610–1695 (TMDDAQKERK…TKVGRFQVTT (86 aa)) is disordered. Residues 1613–1629 (DAQKERKNRSEDTKSVH) are compositionally biased toward basic and acidic residues. Over residues 1632-1650 (SSTSESSVLSSSSPESTLV) the composition is skewed to low complexity. 2 short sequence motifs (RFXV motif) span residues 1690–1693 (RFQV) and 1702–1705 (RFSV). Positions 1709 to 1719 (EDKVTELKKEG) are enriched in basic and acidic residues. 3 disordered regions span residues 1709–1783 (EDKV…LCSK), 1856–1940 (VIIP…NLYS), and 1952–1990 (SLSA…KGTF). Ser-1723 is subject to Phosphoserine. Residues 1738 to 1747 (PKKEKPELAE) show a composition bias toward basic and acidic residues. Residues Ser-1755, Ser-1756, Ser-1771, Ser-1773, Ser-1776, and Ser-1865 each carry the phosphoserine modification. Over residues 1866–1878 (GRRRRPTKSKGSK) the composition is skewed to basic residues. Over residues 1879-1889 (SSRSSSLGNKS) the composition is skewed to low complexity. Over residues 1890 to 1940 (PQLSGNLSGQSGTSVLNPQQTLHPPGNTPETGHNQLLQPLKPSPSSDNLYS) the composition is skewed to polar residues. Low complexity predominate over residues 1957 to 1981 (GQGTSSTNTVGGTVSSQAAQAQPPA). Residues 1985–2005 (SRKGTFTDDLHKLVDNWARDA) are amphipathic alpha-helix. Ser-2014 and Ser-2030 each carry phosphoserine. The interval 2076–2097 (PFGTQWSGTGGPAPQPLGQFQP) is disordered. Residues Ser-2114 and Ser-2116 each carry the phosphoserine modification.

Belongs to the protein kinase superfamily. Ser/Thr protein kinase family. WNK subfamily. Interacts with WNK3. Interacts with WNK4; inhibiting the activity of WNK4. Interacts with SGK1; promoting its activation. Associates with the mTORC2 complex. Interacts with UVRAG. Interacts (via amphipathic alpha-helix region) with EMC2; promoting the ER membrane protein complex assembly. In terms of assembly, interacts with isoform 1; inhibiting isoform 1 activity. It depends on Mg(2+) as a cofactor. Post-translationally, autophosphorylated at Ser-378 and Ser-382, promoting its activity. Autophosphorylation at Ser-382 is inhibited by intracellular calcium. Phosphorylation at Thr-58 increases ability to activate SGK1. In terms of processing, ubiquitinated by the BCR(KLHL3) complex, leading to its degradation. Also ubiquitinated by the BCR(KLHL2) complex. May be O-glycosylated.

The protein resides in the cytoplasm. It is found in the nucleus. The protein localises to the cytoskeleton. Its subcellular location is the spindle. The catalysed reaction is L-seryl-[protein] + ATP = O-phospho-L-seryl-[protein] + ADP + H(+). It carries out the reaction L-threonyl-[protein] + ATP = O-phospho-L-threonyl-[protein] + ADP + H(+). Its activity is regulated as follows. Activated in response to hyperosmotic stress: cell shrinkage promotes formation of a membraneless compartment that concentrates WNK1 with its substrates, OXSR1/OSR1 and STK39/SPAK. Activation requires autophosphorylation of Ser-382 and, to a lower extent, Ser-378. Autophosphorylation and subsequent activation is inhibited by increases in intracellular ionic strength: Cl(-) potently inhibits WNK1 kinase activity via direct binding. Also inhibited by K(+) ions. Inhibited by Compound 12 ((5-Chloro-2-(2-((methyl-d3)amino)thiazol-4-yl)- pyridin-4-yl)(4-(4-chlorobenzyl)piperazin-1-yl)methanone). Functionally, serine/threonine-protein kinase component of the WNK1-SPAK/OSR1 kinase cascade, which acts as a key regulator of blood pressure and regulatory volume increase by promoting ion influx. WNK1 mediates regulatory volume increase in response to hyperosmotic stress by acting as a molecular crowding sensor, which senses cell shrinkage and mediates formation of a membraneless compartment by undergoing liquid-liquid phase separation. The membraneless compartment concentrates WNK1 with its substrates, OXSR1/OSR1 and STK39/SPAK, promoting WNK1-dependent phosphorylation and activation of downstream kinases OXSR1/OSR1 and STK39/SPAK. Following activation, OXSR1/OSR1 and STK39/SPAK catalyze phosphorylation of ion cotransporters SLC12A1/NKCC2, SLC12A2/NKCC1, SLC12A5/KCC2 and SLC12A6/KCC3, regulating their activity. Phosphorylation of Na-K-Cl cotransporters SLC12A2/NKCC1 and SLC12A2/NKCC1 promote their activation and ion influx; simultaneously, phosphorylation of K-Cl cotransporters SLC12A5/KCC2 and SLC12A6/KCC3 inhibit their activity, blocking ion efflux. Also acts as a regulator of angiogenesis in endothelial cells. Also acts independently of the WNK1-SPAK/OSR1 kinase cascade by catalyzing phosphorylation of other substrates, such as SYT2, PCF11 and NEDD4L. Mediates phosphorylation of SYT2, regulating SYT2 association with phospholipids and membrane-binding. Regulates mRNA export in the nucleus by mediating phosphorylation of PCF11, thereby decreasing the association between PCF11 and POLR2A/RNA polymerase II and promoting mRNA export to the cytoplasm. Acts as a negative regulator of autophagy. Required for the abscission step during mitosis, independently of the WNK1-SPAK/OSR1 kinase cascade. WNK1 may also play a role in actin cytoskeletal reorganization. Also acts as a scaffold protein independently of its protein kinase activity: negatively regulates cell membrane localization of various transporters and channels, such as SLC4A4, SLC26A6, SLC26A9, TRPV4 and CFTR. Involved in the regulation of epithelial Na(+) channel (ENaC) by promoting activation of SGK1 in a kinase-independent manner. Probably activates SGK1 by acting as a scaffold protein that promotes the recruitment of SGK1 to the mTORC2 complex in response to chloride, leading to mTORC2-dependent phosphorylation and activation of SGK1. Acts as an assembly factor for the ER membrane protein complex independently of its protein kinase activity: associates with EMC2 in the cytoplasm via its amphipathic alpha-helix, and prevents EMC2 ubiquitination and subsequent degradation, thereby promoting EMC2 stabilization. Its function is as follows. Kinase-defective isoform specifically expressed in kidney, which acts as a dominant-negative regulator of the longer isoform 1. Does not directly inhibit WNK4 and has no direct effect on sodium and chloride ion transport. Down-regulates sodium-chloride cotransporter activity indirectly by inhibiting isoform 1, it associates with isoform 1 and attenuates its kinase activity. In kidney, may play an important role regulating sodium and potassium balance. In terms of biological role, kinase-defective isoform produced by alternative promoter usage and alternative splicing. The protein is Serine/threonine-protein kinase WNK1 of Rattus norvegicus (Rat).